The chain runs to 545 residues: MSNRAKSPALDAVVIGAGVTGIYQAFLINQAGMKVLGIEAGEDVGGTWYWNRYPGCRLDTESYAYGYFALKGIIPEWEWSENFASQPEMLRYVNRAADAMDVRKHYRFNTRVTAARYVENDRLWEVTLDNEEVVTCRFLISATGPLSASRMPDIKGIDSFKGESFHSSRWPTDAEGAPKGVDFTGKRVGVIGTGATGVQIIPIAAETAKELYVFQRTPNWCTPLGNSPMSKEKMDSLRNRYPTILEYVKSTDTAFPYHRDPRKGTDVSESERDAFFEELYRQPGYGIWLSGFRDLLLNKESNKFLADFVAKKIRQRVKDPVVAEKLIPKDHPFGAKRVPMETNYYETYNRDNVHLVDIREAPIQEVTPEGIKTADAAYDLDVIIYATGFDAVTGSLDRIDIRGKDNVRLIDAWAEGPSTYLGLQARGFPNFFTLVGPHNGSTFCNVGVCGGLQAEWVLRMISYMKDNGFTYSEPTQAAENRWTEEVYADFSRTLLAEANAWWVKTTTKPDGSVVRRTLVHVSGGPEYRKRCEQVAYNNYNGFELA.

FAD-binding positions include Thr20, Glu39, 47–50, 59–60, Tyr65, and Val112; these read TWYW and DT. 57 to 59 contacts NADP(+); the sequence is RLD. NADP(+) is bound by residues 193–199 and 216–217; these read TGATGVQ and RT. Residue Val446 coordinates FAD. Trp501 provides a ligand contact to NADP(+).

This sequence belongs to the FAD-binding monooxygenase family. In terms of assembly, homodimer. FAD serves as cofactor.

The enzyme catalyses [(1R)-2,2,3-trimethyl-5-oxocyclopent-3-enyl]acetyl-CoA + NADPH + O2 + H(+) = [(2R)-3,3,4-trimethyl-6-oxo-3,6-dihydro-1H-pyran-2-yl]acetyl-CoA + NADP(+) + H2O. It functions in the pathway terpene metabolism; (R)-camphor degradation. Involved in the degradation of (+)-camphor. Catalyzes the lactonization of 2-oxo-delta(3)-4,5, 5-trimethylcyclopentenylacetyl-CoA (OT-CoA), a key intermediate in the metabolism of camphor. 2-Oxocyclopentyl ethyl acetate is also a good substrate, as is 2-oxocyclohexyl ethyl acetate and methyl-substituted cyclohexanones, but free acid is a poor substrate. The protein is 2-oxo-Delta(3)-4,5,5-trimethylcyclopentenylacetyl-CoA monooxygenase (otemo) of Pseudomonas putida (Arthrobacter siderocapsulatus).